Consider the following 72-residue polypeptide: Cytochrome b-c1 complex subunit 8-1, mitochondrial (72 aa).

The Mitochondrial matrix portion of the chain corresponds to 1-41 (MGKQPVKLKAVVYALSPFQQKIMTGLWKDLPEKIHHKVSEN). Residues 42-58 (WISATLLVTPVVGTYWY) form a helical membrane-spanning segment. The Mitochondrial intermembrane portion of the chain corresponds to 59–72 (AQYFKEQEKLEHRF).

The protein belongs to the UQCRQ/QCR8 family. As to quaternary structure, component of the ubiquinol-cytochrome c oxidoreductase (cytochrome b-c1 complex, complex III, CIII), a multisubunit enzyme composed of 10 subunits. The complex is composed of 3 respiratory subunits cytochrome b (MT-CYB), cytochrome c1 (CYC1-1 or CYC1-2) and Rieske protein (UCR1-1 or UCR1-2), 2 core protein subunits MPPalpha1 (or MPPalpha2) and MPPB, and 5 low-molecular weight protein subunits QCR7-1 (or QCR7-2), UCRQ-1 (or UCRQ-2), QCR9, UCRY and probably QCR6-1 (or QCR6-2). The complex exists as an obligatory dimer and forms supercomplexes (SCs) in the inner mitochondrial membrane with NADH-ubiquinone oxidoreductase (complex I, CI), resulting in different assemblies (supercomplexes SCI(1)III(2) and SCI(2)III(4)).

Its subcellular location is the mitochondrion inner membrane. Functionally, component of the ubiquinol-cytochrome c oxidoreductase, a multisubunit transmembrane complex that is part of the mitochondrial electron transport chain which drives oxidative phosphorylation. The respiratory chain contains 3 multisubunit complexes succinate dehydrogenase (complex II, CII), ubiquinol-cytochrome c oxidoreductase (cytochrome b-c1 complex, complex III, CIII) and cytochrome c oxidase (complex IV, CIV), that cooperate to transfer electrons derived from NADH and succinate to molecular oxygen, creating an electrochemical gradient over the inner membrane that drives transmembrane transport and the ATP synthase. The cytochrome b-c1 complex catalyzes electron transfer from ubiquinol to cytochrome c, linking this redox reaction to translocation of protons across the mitochondrial inner membrane, with protons being carried across the membrane as hydrogens on the quinol. In the process called Q cycle, 2 protons are consumed from the matrix, 4 protons are released into the intermembrane space and 2 electrons are passed to cytochrome c. The chain is Cytochrome b-c1 complex subunit 8-1, mitochondrial (UCRQ-1) from Arabidopsis thaliana (Mouse-ear cress).